Consider the following 450-residue polypeptide: Cell division cycle 20.5, cofactor of APC complex (450 aa).

WD repeat units lie at residues 129 to 166 (ADDF…TYKL), 171 to 210 (EEEG…QVRT), 214 to 251 (GHES…SIVE), 255 to 294 (GHTE…SSNP), 304 to 346 (EHTA…CLNS), 348 to 389 (ETGS…KMAE), and 392 to 431 (GHTS…PKTT).

It belongs to the WD repeat CDC20/Fizzy family. In terms of assembly, the APC/C is composed of at least 11 subunits that stay tightly associated throughout the cell cycle. Binds to GIG1 and PYM. Part of the mitotic checkpoint complex (MCC); interacts with MAD2 and BUB1.

It is found in the nucleus. Its pathway is protein modification; protein ubiquitination. Its function is as follows. Component of the anaphase promoting complex/cyclosome (APC/C), a cell cycle-regulated E3 ubiquitin-protein ligase complex that controls progression through mitosis and the G1 phase of the cell cycle. This chain is Cell division cycle 20.5, cofactor of APC complex (CDC20-5), found in Arabidopsis thaliana (Mouse-ear cress).